Consider the following 358-residue polypeptide: uncharacterized protein (358 aa).

The segment covering 70–88 (RPAATAGTTPATGASGSAR) has biased composition (low complexity). Residues 70–93 (RPAATAGTTPATGASGSARPTDAA) are disordered. The 176-residue stretch at 178–353 (PSTCRGDNVS…AFSAAIQAGE (176 aa)) folds into the Macro domain.

This is an uncharacterized protein from Mycobacterium bovis (strain ATCC BAA-935 / AF2122/97).